Reading from the N-terminus, the 161-residue chain is Allophycocyanin beta chain (161 aa).

At Asn71 the chain carries N4-methylasparagine. Residue Cys81 coordinates (2R,3E)-phycocyanobilin.

It belongs to the phycobiliprotein family. In terms of assembly, heterodimer of an alpha and a beta chain. Post-translationally, contains one covalently linked phycocyanobilin chromophore.

The protein localises to the cellular thylakoid membrane. Functionally, light-harvesting photosynthetic bile pigment-protein from the phycobiliprotein complex. Allophycocyanin has a maximum absorption at approximately 650 nanometers. This is Allophycocyanin beta chain (apcB) from Anabaena cylindrica.